Reading from the N-terminus, the 388-residue chain is Na(+)/H(+) antiporter NhaA (388 aa).

A run of 11 helical transmembrane segments spans residues 14-34 (GGII…MGAT), 59-79 (MLLW…GLEV), 95-115 (AFPV…YLAF), 125-145 (GWAI…ALLG), 154-174 (IFLM…IALF), 179-199 (LSIV…LLNL), 219-239 (VLKS…FIPL), 254-274 (VLHP…NAGV), 292-312 (IIAG…WLAL), 328-348 (IMAV…IASL), and 360-380 (WAKL…YSWL).

Belongs to the NhaA Na(+)/H(+) (TC 2.A.33) antiporter family.

It is found in the cell inner membrane. It carries out the reaction Na(+)(in) + 2 H(+)(out) = Na(+)(out) + 2 H(+)(in). Its function is as follows. Na(+)/H(+) antiporter that extrudes sodium in exchange for external protons. The protein is Na(+)/H(+) antiporter NhaA of Salmonella choleraesuis (strain SC-B67).